The sequence spans 210 residues: Large ribosomal subunit protein uL4 (210 aa).

Positions S47–N64 are enriched in polar residues. Residues S47–S83 form a disordered region.

The protein belongs to the universal ribosomal protein uL4 family. Part of the 50S ribosomal subunit.

Its function is as follows. One of the primary rRNA binding proteins, this protein initially binds near the 5'-end of the 23S rRNA. It is important during the early stages of 50S assembly. It makes multiple contacts with different domains of the 23S rRNA in the assembled 50S subunit and ribosome. Forms part of the polypeptide exit tunnel. This Blochmanniella pennsylvanica (strain BPEN) protein is Large ribosomal subunit protein uL4.